The primary structure comprises 155 residues: 2-C-methyl-D-erythritol 2,4-cyclodiphosphate synthase (155 aa).

2 residues coordinate a divalent metal cation: Asp-8 and His-10. 4-CDP-2-C-methyl-D-erythritol 2-phosphate-binding positions include 8 to 10 and 34 to 35; these read DVH and HS. His-42 contacts a divalent metal cation. 4-CDP-2-C-methyl-D-erythritol 2-phosphate contacts are provided by residues 56 to 58, 61 to 65, 100 to 106, 132 to 135, Phe-139, and Lys-142; these read DIG, FPDSD, AQKPKML, and TTEE.

Belongs to the IspF family. In terms of assembly, homotrimer. Requires a divalent metal cation as cofactor.

The enzyme catalyses 4-CDP-2-C-methyl-D-erythritol 2-phosphate = 2-C-methyl-D-erythritol 2,4-cyclic diphosphate + CMP. Its pathway is isoprenoid biosynthesis; isopentenyl diphosphate biosynthesis via DXP pathway; isopentenyl diphosphate from 1-deoxy-D-xylulose 5-phosphate: step 4/6. Involved in the biosynthesis of isopentenyl diphosphate (IPP) and dimethylallyl diphosphate (DMAPP), two major building blocks of isoprenoid compounds. Catalyzes the conversion of 4-diphosphocytidyl-2-C-methyl-D-erythritol 2-phosphate (CDP-ME2P) to 2-C-methyl-D-erythritol 2,4-cyclodiphosphate (ME-CPP) with a corresponding release of cytidine 5-monophosphate (CMP). This chain is 2-C-methyl-D-erythritol 2,4-cyclodiphosphate synthase, found in Clostridium botulinum (strain ATCC 19397 / Type A).